The chain runs to 130 residues: Small ribosomal subunit protein uS11c (130 aa).

This sequence belongs to the universal ribosomal protein uS11 family. In terms of assembly, part of the 30S ribosomal subunit.

It is found in the plastid. The protein resides in the chloroplast. The polypeptide is Small ribosomal subunit protein uS11c (Anthoceros angustus (Hornwort)).